We begin with the raw amino-acid sequence, 153 residues long: Heavy metal-associated isoprenylated plant protein 26 (153 aa).

The 65-residue stretch at 25–89 folds into the HMA domain; it reads LQTVEIKVKM…MSHRTGKKVE (65 aa). A metal cation-binding residues include C36 and C39. C150 is subject to Cysteine methyl ester. C150 is lipidated: S-farnesyl cysteine. A propeptide spans 151 to 153 (removed in mature form); that stretch reads VVM.

The protein belongs to the HIPP family. Interacts with ZHD11/HB29 and ACBP2 (via ankyrin repeats). May also interact with HB21. In terms of tissue distribution, expressed in roots, stems and flowers. Lower expression in siliques and leaves. Expressed in the vascular tissues. Detected in lateral roots, shoot apical meristem, petals of unopened flowers and weak expression in leaf vasculature.

The protein localises to the nucleus membrane. The protein resides in the cell membrane. Functionally, heavy-metal-binding protein. Binds lead, cadmium and copper. May be involved in heavy-metal transport. May be involved in cadmium transport and play a role in cadmium detoxification. The chain is Heavy metal-associated isoprenylated plant protein 26 from Arabidopsis thaliana (Mouse-ear cress).